The primary structure comprises 71 residues: DNA-directed RNA polymerase subunit epsilon (71 aa).

Belongs to the RNA polymerase subunit epsilon family. RNAP is composed of a core of 2 alpha, a beta and a beta' subunit. The core is associated with a delta subunit, and at least one of epsilon or omega. When a sigma factor is associated with the core the holoenzyme is formed, which can initiate transcription.

It carries out the reaction RNA(n) + a ribonucleoside 5'-triphosphate = RNA(n+1) + diphosphate. Its function is as follows. A non-essential component of RNA polymerase (RNAP). In Staphylococcus carnosus (strain TM300), this protein is DNA-directed RNA polymerase subunit epsilon.